A 679-amino-acid polypeptide reads, in one-letter code: UvrABC system protein B (679 aa).

One can recognise a Helicase ATP-binding domain in the interval 25–412 (EGVNQGQRYQ…DGHLAEQVIR (388 aa)). Residue 38–45 (GATGTGKT) participates in ATP binding. The short motif at 91–114 (YYDYYQPEAYVPVSDTYIAKTSSI) is the Beta-hairpin element. The region spanning 429–591 (QVDDLLAEIR…IVPRPAGKRA (163 aa)) is the Helicase C-terminal domain. The 36-residue stretch at 639–674 (PELIDQLETKMKEAAKNLNFEEAASLRDRIKKFRQK) folds into the UVR domain.

Belongs to the UvrB family. Forms a heterotetramer with UvrA during the search for lesions. Interacts with UvrC in an incision complex.

Its subcellular location is the cytoplasm. Its function is as follows. The UvrABC repair system catalyzes the recognition and processing of DNA lesions. A damage recognition complex composed of 2 UvrA and 2 UvrB subunits scans DNA for abnormalities. Upon binding of the UvrA(2)B(2) complex to a putative damaged site, the DNA wraps around one UvrB monomer. DNA wrap is dependent on ATP binding by UvrB and probably causes local melting of the DNA helix, facilitating insertion of UvrB beta-hairpin between the DNA strands. Then UvrB probes one DNA strand for the presence of a lesion. If a lesion is found the UvrA subunits dissociate and the UvrB-DNA preincision complex is formed. This complex is subsequently bound by UvrC and the second UvrB is released. If no lesion is found, the DNA wraps around the other UvrB subunit that will check the other stand for damage. In Prochlorococcus marinus (strain MIT 9313), this protein is UvrABC system protein B.